The primary structure comprises 428 residues: Histidinol dehydrogenase (428 aa).

Ser234, Gln256, and His259 together coordinate substrate. The Zn(2+) site is built by Gln256 and His259. Catalysis depends on proton acceptor residues Glu323 and His324. 4 residues coordinate substrate: His324, Asp357, Glu411, and His416. Asp357 contacts Zn(2+). His416 is a Zn(2+) binding site.

This sequence belongs to the histidinol dehydrogenase family. Zn(2+) serves as cofactor.

The enzyme catalyses L-histidinol + 2 NAD(+) + H2O = L-histidine + 2 NADH + 3 H(+). It participates in amino-acid biosynthesis; L-histidine biosynthesis; L-histidine from 5-phospho-alpha-D-ribose 1-diphosphate: step 9/9. Functionally, catalyzes the sequential NAD-dependent oxidations of L-histidinol to L-histidinaldehyde and then to L-histidine. This chain is Histidinol dehydrogenase, found in Campylobacter jejuni (strain RM1221).